A 290-amino-acid chain; its full sequence is Inositol monophosphatase 2 (290 aa).

4 residues coordinate Mg(2+): Glu83, Asp103, Ile105, and Asp106. Position 83 (Glu83) interacts with substrate. Residues 105–108, 207–209, Gln226, and Asp233 contribute to the substrate site; these read IDGT and GSS. A Mg(2+)-binding site is contributed by Asp233.

Belongs to the inositol monophosphatase superfamily. In terms of assembly, homodimer. Mg(2+) serves as cofactor.

The protein localises to the cytoplasm. It carries out the reaction a myo-inositol phosphate + H2O = myo-inositol + phosphate. It functions in the pathway polyol metabolism; myo-inositol biosynthesis; myo-inositol from D-glucose 6-phosphate: step 2/2. Can use myo-inositol monophosphates, scylloinositol 1,4-diphosphate, glucose-1-phosphate, beta-glycerophosphate, and 2'-AMP as substrates. Has been implicated as the pharmacological target for lithium Li(+) action in brain. The protein is Inositol monophosphatase 2 (Impa2) of Rattus norvegicus (Rat).